Consider the following 113-residue polypeptide: Large ribosomal subunit protein uL24 (113 aa).

This sequence belongs to the universal ribosomal protein uL24 family. As to quaternary structure, part of the 50S ribosomal subunit.

One of two assembly initiator proteins, it binds directly to the 5'-end of the 23S rRNA, where it nucleates assembly of the 50S subunit. Its function is as follows. One of the proteins that surrounds the polypeptide exit tunnel on the outside of the subunit. This chain is Large ribosomal subunit protein uL24, found in Chlamydia felis (strain Fe/C-56) (Chlamydophila felis).